The sequence spans 599 residues: Elongation factor 4 (599 aa).

The 183-residue stretch at 4–186 (KFIRNFSIIA…AIIKHVPPPL (183 aa)) folds into the tr-type G domain. GTP is bound by residues 16–21 (DHGKST) and 133–136 (NKID).

Belongs to the TRAFAC class translation factor GTPase superfamily. Classic translation factor GTPase family. LepA subfamily.

The protein resides in the cell membrane. The enzyme catalyses GTP + H2O = GDP + phosphate + H(+). Its function is as follows. Required for accurate and efficient protein synthesis under certain stress conditions. May act as a fidelity factor of the translation reaction, by catalyzing a one-codon backward translocation of tRNAs on improperly translocated ribosomes. Back-translocation proceeds from a post-translocation (POST) complex to a pre-translocation (PRE) complex, thus giving elongation factor G a second chance to translocate the tRNAs correctly. Binds to ribosomes in a GTP-dependent manner. This Ureaplasma parvum serovar 3 (strain ATCC 27815 / 27 / NCTC 11736) protein is Elongation factor 4.